The primary structure comprises 764 residues: 1,4-alpha-glucan branching enzyme GlgB (764 aa).

The active-site Nucleophile is Asp-434. Catalysis depends on Glu-487, which acts as the Proton donor.

It belongs to the glycosyl hydrolase 13 family. GlgB subfamily. Monomer.

The catalysed reaction is Transfers a segment of a (1-&gt;4)-alpha-D-glucan chain to a primary hydroxy group in a similar glucan chain.. The protein operates within glycan biosynthesis; glycogen biosynthesis. Functionally, catalyzes the formation of the alpha-1,6-glucosidic linkages in glycogen by scission of a 1,4-alpha-linked oligosaccharide from growing alpha-1,4-glucan chains and the subsequent attachment of the oligosaccharide to the alpha-1,6 position. This Trichormus variabilis (strain ATCC 29413 / PCC 7937) (Anabaena variabilis) protein is 1,4-alpha-glucan branching enzyme GlgB.